Here is a 219-residue protein sequence, read N- to C-terminus: Vesicle-associated membrane protein 721 (219 aa).

The Cytoplasmic segment spans residues methionine 1 to leucine 196. A Longin domain is found at phenylalanine 10 to leucine 114. In terms of domain architecture, v-SNARE coiled-coil homology spans lysine 130 to glutamine 190. A helical; Anchor for type IV membrane protein transmembrane segment spans residues isoleucine 197–phenylalanine 217. Residues lysine 218 to cysteine 219 lie on the Vesicular side of the membrane.

It belongs to the synaptobrevin family. Expressed in flowers, leaves, stems and roots.

Its subcellular location is the cell membrane. It localises to the early endosome membrane. Functionally, involved in the targeting and/or fusion of transport vesicles to their target membrane. This Arabidopsis thaliana (Mouse-ear cress) protein is Vesicle-associated membrane protein 721.